The chain runs to 97 residues: UstYa family oxidase VicYc (97 aa).

2 consecutive short sequence motifs (HXXHC) follow at residues 11 to 15 (HELHC) and 38 to 42 (HANHC).

Belongs to the ustYa family.

Its pathway is mycotoxin biosynthesis. UstYa family oxidase, part of the gene cluster that mediates the biosynthesis of the secondary metabolite victorin, the molecular basis for Victoria blight of oats. The role of vicYc within the pathway has still to be determined. The pathway starts with the processing of the precursor vicA1 by several endopeptidases including kexin proteases as well as the cluster-specific S28 family peptidases vicPa and vicPb to produce 7 identical copies of the hexapeptide Gly-Leu-Lys-Leu-Ala-Phe. After being excised from the precursor peptide, the core peptides are cyclized and modified post-translationally by enzymes encoded within the gene cluster. The ustYa family oxidase vicYb is required for the formation of the macrocycle in victorin and the copper amine oxidases (CAOs) vicK1 and vicK2 are responsible for converting victorin to the active form by oxidizing the N-terminal glycyl residue in the peptides to glyoxylate. Relaxed substrate specificity of enzymes in the victorin biosynthetic pathway results in a metabolic grid that produces a set of analogs including victorinines B, C, E or HV-toxin M. This is UstYa family oxidase VicYc from Bipolaris victoriae (strain FI3) (Victoria blight of oats agent).